The following is a 344-amino-acid chain: uncharacterized protein (344 aa).

A signal peptide spans 1-27 (MKKWLIIAVSLAIAIVLFMYTKGEAKA). The GH18 domain maps to 29–344 (GMTVGYTTGD…FWKAIRKGTK (316 aa)). The active-site Proton donor is E140.

It belongs to the glycosyl hydrolase 18 family.

This is an uncharacterized protein from Bacillus subtilis (strain 168).